The following is a 267-amino-acid chain: Undecaprenyl-diphosphatase (267 aa).

8 helical membrane passes run 1 to 21 (MSYF…FLPI), 39 to 59 (QGLA…VLYF), 83 to 103 (AKLA…GFVM), 111 to 131 (LRSA…LWYV), 149 to 169 (ALFI…RSGA), 189 to 209 (FLMS…KLVT), 218 to 238 (FLLT…HFFL), and 245 to 265 (GMTP…AFLL).

Belongs to the UppP family.

Its subcellular location is the cell inner membrane. It carries out the reaction di-trans,octa-cis-undecaprenyl diphosphate + H2O = di-trans,octa-cis-undecaprenyl phosphate + phosphate + H(+). In terms of biological role, catalyzes the dephosphorylation of undecaprenyl diphosphate (UPP). Confers resistance to bacitracin. This Vibrio cholerae serotype O1 (strain ATCC 39315 / El Tor Inaba N16961) protein is Undecaprenyl-diphosphatase.